The chain runs to 418 residues: Dihydrolipoyllysine-residue acetyltransferase component of pyruvate dehydrogenase complex (418 aa).

The 77-residue stretch at 2 to 78 (PIKLLMPALS…PVNSLIAVLI (77 aa)) folds into the Lipoyl-binding domain. Lysine 43 is subject to N6-lipoyllysine. The Peripheral subunit-binding (PSBD) domain occupies 133 to 170 (FASPLAKRLAKIQNVRIEEIKGSGPHGRIIKQDVLSHK). The active site involves histidine 388.

It belongs to the 2-oxoacid dehydrogenase family. In terms of assembly, forms a 24-polypeptide structural core with octahedral symmetry. (R)-lipoate is required as a cofactor.

It carries out the reaction N(6)-[(R)-dihydrolipoyl]-L-lysyl-[protein] + acetyl-CoA = N(6)-[(R)-S(8)-acetyldihydrolipoyl]-L-lysyl-[protein] + CoA. The pyruvate dehydrogenase complex catalyzes the overall conversion of pyruvate to acetyl-CoA and CO(2). It contains multiple copies of three enzymatic components: pyruvate dehydrogenase (E1), dihydrolipoamide acetyltransferase (E2) and lipoamide dehydrogenase (E3). This Rickettsia bellii (strain RML369-C) protein is Dihydrolipoyllysine-residue acetyltransferase component of pyruvate dehydrogenase complex (pdhC).